Here is a 107-residue protein sequence, read N- to C-terminus: Translation initiation factor IF-1, chloroplastic (107 aa).

Residues 8–83 (REKKNPREAK…SKGRIIYRLP (76 aa)) form the S1-like domain. Positions 81–107 (RLPHKDSKRTEDSKDTEDLKDTKDSKD) are disordered. Over residues 83–107 (PHKDSKRTEDSKDTEDLKDTKDSKD) the composition is skewed to basic and acidic residues.

Belongs to the IF-1 family. Component of the 30S ribosomal translation pre-initiation complex which assembles on the 30S ribosome in the order IF-2 and IF-3, IF-1 and N-formylmethionyl-tRNA(fMet); mRNA recruitment can occur at any time during PIC assembly.

The protein resides in the plastid. It localises to the chloroplast. Functionally, one of the essential components for the initiation of protein synthesis. Stabilizes the binding of IF-2 and IF-3 on the 30S subunit to which N-formylmethionyl-tRNA(fMet) subsequently binds. Helps modulate mRNA selection, yielding the 30S pre-initiation complex (PIC). Upon addition of the 50S ribosomal subunit IF-1, IF-2 and IF-3 are released leaving the mature 70S translation initiation complex. The polypeptide is Translation initiation factor IF-1, chloroplastic (Saccharum hybrid (Sugarcane)).